We begin with the raw amino-acid sequence, 318 residues long: Ribosomal RNA small subunit methyltransferase H (318 aa).

S-adenosyl-L-methionine contacts are provided by residues 42–44, D62, F86, D108, and Q115; that span reads GGH.

The protein belongs to the methyltransferase superfamily. RsmH family.

It localises to the cytoplasm. The catalysed reaction is cytidine(1402) in 16S rRNA + S-adenosyl-L-methionine = N(4)-methylcytidine(1402) in 16S rRNA + S-adenosyl-L-homocysteine + H(+). Its function is as follows. Specifically methylates the N4 position of cytidine in position 1402 (C1402) of 16S rRNA. This Yersinia pestis (strain Pestoides F) protein is Ribosomal RNA small subunit methyltransferase H.